The chain runs to 92 residues: Ferredoxin-like protein in nif region (92 aa).

4Fe-4S ferredoxin-type domains follow at residues 2 to 28 (ALKI…SLAG) and 29 to 65 (PHFE…LADG). Cys-9, Cys-12, Cys-15, Cys-19, Cys-38, Cys-41, Cys-50, and Cys-54 together coordinate [4Fe-4S] cluster.

[4Fe-4S] cluster is required as a cofactor.

In terms of biological role, ferredoxins are iron-sulfur proteins that transfer electrons in a wide variety of metabolic reactions. This Azotobacter vinelandii protein is Ferredoxin-like protein in nif region.